A 173-amino-acid polypeptide reads, in one-letter code: Crossover junction endodeoxyribonuclease RuvC (173 aa).

Catalysis depends on residues Asp-8, Glu-67, and Asp-139. Residues Asp-8, Glu-67, and Asp-139 each coordinate Mg(2+).

It belongs to the RuvC family. Homodimer which binds Holliday junction (HJ) DNA. The HJ becomes 2-fold symmetrical on binding to RuvC with unstacked arms; it has a different conformation from HJ DNA in complex with RuvA. In the full resolvosome a probable DNA-RuvA(4)-RuvB(12)-RuvC(2) complex forms which resolves the HJ. Mg(2+) serves as cofactor.

Its subcellular location is the cytoplasm. It carries out the reaction Endonucleolytic cleavage at a junction such as a reciprocal single-stranded crossover between two homologous DNA duplexes (Holliday junction).. The RuvA-RuvB-RuvC complex processes Holliday junction (HJ) DNA during genetic recombination and DNA repair. Endonuclease that resolves HJ intermediates. Cleaves cruciform DNA by making single-stranded nicks across the HJ at symmetrical positions within the homologous arms, yielding a 5'-phosphate and a 3'-hydroxyl group; requires a central core of homology in the junction. The consensus cleavage sequence is 5'-(A/T)TT(C/G)-3'. Cleavage occurs on the 3'-side of the TT dinucleotide at the point of strand exchange. HJ branch migration catalyzed by RuvA-RuvB allows RuvC to scan DNA until it finds its consensus sequence, where it cleaves and resolves the cruciform DNA. This chain is Crossover junction endodeoxyribonuclease RuvC, found in Proteus mirabilis (strain HI4320).